A 157-amino-acid polypeptide reads, in one-letter code: Small ribosomal subunit protein uS7 (157 aa).

The protein belongs to the universal ribosomal protein uS7 family. As to quaternary structure, part of the 30S ribosomal subunit. Contacts proteins S9 and S11.

Functionally, one of the primary rRNA binding proteins, it binds directly to 16S rRNA where it nucleates assembly of the head domain of the 30S subunit. Is located at the subunit interface close to the decoding center, probably blocks exit of the E-site tRNA. This Rhodopirellula baltica (strain DSM 10527 / NCIMB 13988 / SH1) protein is Small ribosomal subunit protein uS7.